The sequence spans 277 residues: MALFIFLILVGYLMGSINSAIIVCRTFGLPDPREEGSKNPGATNVLRLGGKQYGIMVMVFDALKGILPVILAKLLSAEPVTVAFTALAAVVGHMYPVFFHFRGGKGVATTIGALLAFHFVIGVMVAATWLLVANFWRYSSLASIASISLAPFYSLILVGNLNIFPPLFMITILVLYKHRDNFNRLIDGKEPKIKFKHSVIEEIMEASPATSAEQEFPGKEVIDTNIDETEKTEQAEAVKKPKAKKATTKAKKTASKEETTKKPRSTKPKTKTVKEKE.

Transmembrane regions (helical) follow at residues 3–23, 55–75, 79–99, 111–131, and 155–175; these read LFIF…AIIV, IMVM…AKLL, PVTV…PVFF, IGAL…TWLL, and LILV…ILVL. The tract at residues 207 to 277 is disordered; it reads SPATSAEQEF…PKTKTVKEKE (71 aa). Over residues 216–239 the composition is skewed to basic and acidic residues; the sequence is FPGKEVIDTNIDETEKTEQAEAVK. Composition is skewed to basic residues over residues 240 to 253 and 262 to 271; these read KPKA…AKKT and KPRSTKPKTK.

It belongs to the PlsY family. In terms of assembly, probably interacts with PlsX.

Its subcellular location is the cell inner membrane. It catalyses the reaction an acyl phosphate + sn-glycerol 3-phosphate = a 1-acyl-sn-glycero-3-phosphate + phosphate. Its pathway is lipid metabolism; phospholipid metabolism. Its function is as follows. Catalyzes the transfer of an acyl group from acyl-phosphate (acyl-PO(4)) to glycerol-3-phosphate (G3P) to form lysophosphatidic acid (LPA). This enzyme utilizes acyl-phosphate as fatty acyl donor, but not acyl-CoA or acyl-ACP. This Legionella pneumophila (strain Paris) protein is Glycerol-3-phosphate acyltransferase.